Consider the following 272-residue polypeptide: PILR alpha-associated neural protein (272 aa).

The N-terminal stretch at 1–27 (MWPAQLLSQLLPLWPLLLLPLSLPAQG) is a signal peptide. Residues 25-93 (AQGSSHRSPP…PSGFEEGPPS (69 aa)) form a disordered region. Residues 28–174 (SSHRSPPAPA…FGGRGEGVDP (147 aa)) lie on the Extracellular side of the membrane. O-linked (GalNAc...) threonine glycosylation is present at threonine 136. Residues 175–195 (QLYVTITISIIIVLVATGIIF) form a helical membrane-spanning segment. At 196–272 (KFCWDRSQKR…KGAPAFQLNR (77 aa)) the chain is on the cytoplasmic side. A disordered region spans residues 205–272 (RRRPSGQQGA…KGAPAFQLNR (68 aa)). Residues 209–225 (SGQQGALRQEESQQPLT) are compositionally biased toward polar residues.

O-glycosylation at Thr-136 is essential for recognition by PILRA.

It localises to the membrane. In terms of biological role, acts as a ligand for PILRA in neuronal tissues, where it may be involved in immune regulation. The protein is PILR alpha-associated neural protein (Pianp) of Rattus norvegicus (Rat).